Consider the following 203-residue polypeptide: MGGFVDDGAAGLAPSHGSSRAGRGLEGAGVFLRFVASLLSIAGLMLLVKDNQTVQQMVATEAVTLETKYSDISAFVFLLYTNGLVAVYCFFLALASVFSLIASARSGKLAGWVTFVLDQGLAYVLLAAAAASTEVLYLAENGDLKTSWAEICSQFGHFCHMARASIVVSFLSMLAMAVLSVMSAQQLFSKYRRPMTAKTAQDI.

Positions 1–21 (MGGFVDDGAAGLAPSHGSSRA) are disordered. The Cytoplasmic portion of the chain corresponds to 1–27 (MGGFVDDGAAGLAPSHGSSRAGRGLEG). The chain crosses the membrane as a helical span at residues 28–48 (AGVFLRFVASLLSIAGLMLLV). At 49-73 (KDNQTVQQMVATEAVTLETKYSDIS) the chain is on the extracellular side. N51 carries N-linked (GlcNAc...) asparagine glycosylation. Residues 74–94 (AFVFLLYTNGLVAVYCFFLAL) traverse the membrane as a helical segment. The Cytoplasmic portion of the chain corresponds to 95–108 (ASVFSLIASARSGK). The helical transmembrane segment at 109 to 129 (LAGWVTFVLDQGLAYVLLAAA) threads the bilayer. The Extracellular portion of the chain corresponds to 130–163 (AASTEVLYLAENGDLKTSWAEICSQFGHFCHMAR). A helical membrane pass occupies residues 164–184 (ASIVVSFLSMLAMAVLSVMSA). The Cytoplasmic portion of the chain corresponds to 185 to 203 (QQLFSKYRRPMTAKTAQDI).

This sequence belongs to the Casparian strip membrane proteins (CASP) family. As to quaternary structure, homodimer and heterodimers.

Its subcellular location is the cell membrane. In Osmunda lancea (Fern), this protein is CASP-like protein 2U2.